Consider the following 356-residue polypeptide: tRNA N6-adenosine threonylcarbamoyltransferase (356 aa).

Fe cation contacts are provided by histidine 115 and histidine 119. Substrate-binding positions include 139-143, aspartate 173, glycine 186, aspartate 190, and asparagine 291; that span reads LVSGG. Aspartate 319 provides a ligand contact to Fe cation.

This sequence belongs to the KAE1 / TsaD family. Fe(2+) serves as cofactor.

The protein localises to the cytoplasm. The catalysed reaction is L-threonylcarbamoyladenylate + adenosine(37) in tRNA = N(6)-L-threonylcarbamoyladenosine(37) in tRNA + AMP + H(+). Its function is as follows. Required for the formation of a threonylcarbamoyl group on adenosine at position 37 (t(6)A37) in tRNAs that read codons beginning with adenine. Is involved in the transfer of the threonylcarbamoyl moiety of threonylcarbamoyl-AMP (TC-AMP) to the N6 group of A37, together with TsaE and TsaB. TsaD likely plays a direct catalytic role in this reaction. The sequence is that of tRNA N6-adenosine threonylcarbamoyltransferase from Arthrobacter sp. (strain FB24).